Consider the following 73-residue polypeptide: uncharacterized protein (73 aa).

The next 2 membrane-spanning stretches (helical) occupy residues 7–27 and 47–67; these read LFSSLTFSLTVLFLLLLIPNL and YFGYPSLGILFAGILSPIIIL.

Its subcellular location is the cell membrane. This is an uncharacterized protein from Methanocaldococcus jannaschii (strain ATCC 43067 / DSM 2661 / JAL-1 / JCM 10045 / NBRC 100440) (Methanococcus jannaschii).